The primary structure comprises 182 residues: tRNA-splicing endonuclease (182 aa).

Catalysis depends on residues Tyr-119, His-127, and Lys-158.

The protein belongs to the tRNA-intron endonuclease family. Archaeal short subfamily. In terms of assembly, homotetramer; although the tetramer contains four active sites, only two participate in the cleavage. Therefore, it should be considered as a dimer of dimers.

It carries out the reaction pretRNA = a 3'-half-tRNA molecule with a 5'-OH end + a 5'-half-tRNA molecule with a 2',3'-cyclic phosphate end + an intron with a 2',3'-cyclic phosphate and a 5'-hydroxyl terminus.. Endonuclease that removes tRNA introns. Cleaves pre-tRNA at the 5'- and 3'-splice sites to release the intron. The products are an intron and two tRNA half-molecules bearing 2',3' cyclic phosphate and 5'-OH termini. Recognizes a pseudosymmetric substrate in which 2 bulged loops of 3 bases are separated by a stem of 4 bp. This Saccharolobus islandicus (strain M.16.27) (Sulfolobus islandicus) protein is tRNA-splicing endonuclease.